Consider the following 325-residue polypeptide: tRNA (guanine-N(7)-)-methyltransferase (325 aa).

The disordered stretch occupies residues 1–101 (MSEATDKQKQ…LEYPKSPESM (101 aa)). Over residues 51-69 (VSTTPEPEQSDSSATTATI) the composition is skewed to polar residues. Residues Gly122, 145–146 (EI), 199–200 (NA), and Cys219 each bind S-adenosyl-L-methionine. The active site involves Asp222. 297–299 (TEE) lines the S-adenosyl-L-methionine pocket.

This sequence belongs to the class I-like SAM-binding methyltransferase superfamily. TrmB family. As to quaternary structure, forms a complex with TRM82.

The protein resides in the nucleus. The enzyme catalyses guanosine(46) in tRNA + S-adenosyl-L-methionine = N(7)-methylguanosine(46) in tRNA + S-adenosyl-L-homocysteine. It participates in tRNA modification; N(7)-methylguanine-tRNA biosynthesis. Catalyzes the formation of N(7)-methylguanine at position 46 (m7G46) in tRNA. This chain is tRNA (guanine-N(7)-)-methyltransferase, found in Candida albicans (strain SC5314 / ATCC MYA-2876) (Yeast).